The sequence spans 185 residues: Elongation factor P (185 aa).

Belongs to the elongation factor P family.

It is found in the cytoplasm. It functions in the pathway protein biosynthesis; polypeptide chain elongation. Involved in peptide bond synthesis. Stimulates efficient translation and peptide-bond synthesis on native or reconstituted 70S ribosomes in vitro. Probably functions indirectly by altering the affinity of the ribosome for aminoacyl-tRNA, thus increasing their reactivity as acceptors for peptidyl transferase. This Petrotoga mobilis (strain DSM 10674 / SJ95) protein is Elongation factor P.